Here is a 356-residue protein sequence, read N- to C-terminus: sn-glycerol-3-phosphate import ATP-binding protein UgpC (356 aa).

The ABC transporter domain occupies Leu4 to Ile235. Gly37–Ser44 contributes to the ATP binding site.

The protein belongs to the ABC transporter superfamily. sn-glycerol-3-phosphate importer (TC 3.A.1.1.3) family. The complex is composed of two ATP-binding proteins (UgpC), two transmembrane proteins (UgpA and UgpE) and a solute-binding protein (UgpB).

The protein resides in the cell inner membrane. It carries out the reaction sn-glycerol 3-phosphate(out) + ATP + H2O = sn-glycerol 3-phosphate(in) + ADP + phosphate + H(+). Its function is as follows. Part of the ABC transporter complex UgpBAEC involved in sn-glycerol-3-phosphate (G3P) import. Responsible for energy coupling to the transport system. This is sn-glycerol-3-phosphate import ATP-binding protein UgpC from Shigella boydii serotype 4 (strain Sb227).